The following is a 509-amino-acid chain: ATP synthase subunit alpha (509 aa).

169–176 contacts ATP; it reads GDRQTGKT.

It belongs to the ATPase alpha/beta chains family. As to quaternary structure, F-type ATPases have 2 components, CF(1) - the catalytic core - and CF(0) - the membrane proton channel. CF(1) has five subunits: alpha(3), beta(3), gamma(1), delta(1), epsilon(1). CF(0) has four main subunits: a(1), b(1), b'(1) and c(9-12).

Its subcellular location is the cell inner membrane. The enzyme catalyses ATP + H2O + 4 H(+)(in) = ADP + phosphate + 5 H(+)(out). Produces ATP from ADP in the presence of a proton gradient across the membrane. The alpha chain is a regulatory subunit. The polypeptide is ATP synthase subunit alpha (Erythrobacter litoralis (strain HTCC2594)).